Here is a 544-residue protein sequence, read N- to C-terminus: Probable protein kinase UbiB (544 aa).

The Protein kinase domain maps to 123 to 501; sequence DFDIKPLASA…KRQQGTGKFL (379 aa). Residues 129-137 and Lys152 each bind ATP; that span reads LASASIAQV. Asp287 (proton acceptor) is an active-site residue. 2 helical membrane passes run 496-516 and 519-539; these read GTGK…AIWI and QLEP…LLSW.

It belongs to the ABC1 family. UbiB subfamily.

It is found in the cell inner membrane. Its pathway is cofactor biosynthesis; ubiquinone biosynthesis [regulation]. Its function is as follows. Is probably a protein kinase regulator of UbiI activity which is involved in aerobic coenzyme Q (ubiquinone) biosynthesis. The polypeptide is Probable protein kinase UbiB (Vibrio cholerae serotype O1 (strain ATCC 39315 / El Tor Inaba N16961)).